The sequence spans 321 residues: Probable arabinan endo-1,5-alpha-L-arabinosidase A (321 aa).

The N-terminal stretch at 1-19 (MSASVFVVVASCLAALAHG) is a signal peptide. D34 acts as the Proton acceptor in catalysis. E200 (proton donor) is an active-site residue.

The protein belongs to the glycosyl hydrolase 43 family.

The protein localises to the secreted. It carries out the reaction Endohydrolysis of (1-&gt;5)-alpha-arabinofuranosidic linkages in (1-&gt;5)-arabinans.. Its pathway is glycan metabolism; L-arabinan degradation. Endo-1,5-alpha-L-arabinanase involved in degradation of pectin. Its preferred substrate is linear 1,5-alpha-L-arabinan. The protein is Probable arabinan endo-1,5-alpha-L-arabinosidase A (abnA) of Aspergillus fumigatus (strain ATCC MYA-4609 / CBS 101355 / FGSC A1100 / Af293) (Neosartorya fumigata).